An 815-amino-acid chain; its full sequence is MNAPFTYSSPTLSVEALKHSIAYKLMFTIGKDPVVANKHEWLNATLFAVRDRLVERWLRSNRAQLSQETRQVYYLSMEFLIGRTLSNAMLSLGIYEDVQGALEAMGLNLEELIDEENDPGLGNGGLGRLAACFLDSLATLGLPGRGYGIRYDYGMFKQNIVNGSQKESPDYWLEYGNPWEFKRHNTRYKVRFGGRIQQEGKKTRWIETEEILGVAYDQIIPGYDTDATNTLRLWSAQASSEINLGKFNQGDYFAAVEDKNHSENVSRVLYPDDSTYSGRELRLRQEYFLVSSTIQDILSRHYQLHKTYDNLADKIAIHLNDTHPVLSIPEMMRLLIDEHQFSWDDAFEVCCQVFSYTNHTLMSEALETWPVDMLGKILPRHLQIIFEINDYFLKTLQEQYPNDTDLLGRASIIDESNGRRVRMAWLAVVVSHKVNGVSELHSNLMVQSLFADFAKIFPGRFTNVTNGVTPRRWLAVANPSLSAVLDEHLGRNWRTDLSLLNELQQHCDFPMVNHAVHQAKLENKKRLAEYIAQQLNVVVNPKALFDVQIKRIHEYKRQLMNVLHVITRYNRIKADPDAKWVPRVNIFGGKAASAYYMAKHIIHLINDVAKVINNDPQIGDKLKVVFIPNYSVSLAQLIIPAADLSEQISLAGTEASGTSNMKFALNGALTIGTLDGANVEMLDHVGADNIFIFGNTAEEVEELRRQGYKPREYYEKDEELHQVLTQIGSGVFSPEDPGRYRDLVDSLINFGDHYQVLADYRSYVDCQDKVDELYELQEEWTAKAMLNIANMGYFSSDRTIKEYADHIWHIDPVRL.

K662 is modified (N6-(pyridoxal phosphate)lysine).

The protein belongs to the glycogen phosphorylase family. The cofactor is pyridoxal 5'-phosphate.

The catalysed reaction is [(1-&gt;4)-alpha-D-glucosyl](n) + phosphate = [(1-&gt;4)-alpha-D-glucosyl](n-1) + alpha-D-glucose 1-phosphate. Functionally, phosphorylase is an important allosteric enzyme in carbohydrate metabolism. Enzymes from different sources differ in their regulatory mechanisms and in their natural substrates. However, all known phosphorylases share catalytic and structural properties. The polypeptide is Glycogen phosphorylase (glgP) (Shigella flexneri).